Here is a 147-residue protein sequence, read N- to C-terminus: 3-dehydroquinate dehydratase (147 aa).

Tyrosine 23 acts as the Proton acceptor in catalysis. 3 residues coordinate substrate: asparagine 75, histidine 81, and aspartate 88. Histidine 101 functions as the Proton donor in the catalytic mechanism. Substrate is bound by residues 102–103 (LS) and arginine 112.

Belongs to the type-II 3-dehydroquinase family. Homododecamer.

The enzyme catalyses 3-dehydroquinate = 3-dehydroshikimate + H2O. The protein operates within metabolic intermediate biosynthesis; chorismate biosynthesis; chorismate from D-erythrose 4-phosphate and phosphoenolpyruvate: step 3/7. Catalyzes a trans-dehydration via an enolate intermediate. The protein is 3-dehydroquinate dehydratase of Stenotrophomonas maltophilia (strain K279a).